A 545-amino-acid polypeptide reads, in one-letter code: Chaperonin GroEL (545 aa).

ATP-binding positions include 30 to 33 (TLGP), K51, 87 to 91 (DGTTT), G415, 479 to 481 (NAA), and D495.

The protein belongs to the chaperonin (HSP60) family. In terms of assembly, forms a cylinder of 14 subunits composed of two heptameric rings stacked back-to-back. Interacts with the co-chaperonin GroES.

It localises to the cytoplasm. It carries out the reaction ATP + H2O + a folded polypeptide = ADP + phosphate + an unfolded polypeptide.. In terms of biological role, together with its co-chaperonin GroES, plays an essential role in assisting protein folding. The GroEL-GroES system forms a nano-cage that allows encapsulation of the non-native substrate proteins and provides a physical environment optimized to promote and accelerate protein folding. The sequence is that of Chaperonin GroEL from Salmonella agona (strain SL483).